A 219-amino-acid chain; its full sequence is Deoxyribose-phosphate aldolase (219 aa).

Asp-93 functions as the Proton donor/acceptor in the catalytic mechanism. Lys-154 functions as the Schiff-base intermediate with acetaldehyde in the catalytic mechanism. Lys-179 (proton donor/acceptor) is an active-site residue.

This sequence belongs to the DeoC/FbaB aldolase family. DeoC type 1 subfamily.

Its subcellular location is the cytoplasm. The enzyme catalyses 2-deoxy-D-ribose 5-phosphate = D-glyceraldehyde 3-phosphate + acetaldehyde. The protein operates within carbohydrate degradation; 2-deoxy-D-ribose 1-phosphate degradation; D-glyceraldehyde 3-phosphate and acetaldehyde from 2-deoxy-alpha-D-ribose 1-phosphate: step 2/2. Catalyzes a reversible aldol reaction between acetaldehyde and D-glyceraldehyde 3-phosphate to generate 2-deoxy-D-ribose 5-phosphate. This chain is Deoxyribose-phosphate aldolase, found in Haloquadratum walsbyi (strain DSM 16790 / HBSQ001).